Reading from the N-terminus, the 1204-residue chain is DNA-directed RNA polymerase subunit beta' (1204 aa).

The Zn(2+) site is built by C60, C62, C75, and C78. Mg(2+)-binding residues include D449, D451, and D453. 4 residues coordinate Zn(2+): C819, C893, C900, and C903.

The protein belongs to the RNA polymerase beta' chain family. As to quaternary structure, the RNAP catalytic core consists of 2 alpha, 1 beta, 1 beta' and 1 omega subunit. When a sigma factor is associated with the core the holoenzyme is formed, which can initiate transcription. Mg(2+) serves as cofactor. The cofactor is Zn(2+).

The enzyme catalyses RNA(n) + a ribonucleoside 5'-triphosphate = RNA(n+1) + diphosphate. DNA-dependent RNA polymerase catalyzes the transcription of DNA into RNA using the four ribonucleoside triphosphates as substrates. This is DNA-directed RNA polymerase subunit beta' from Bacillus cytotoxicus (strain DSM 22905 / CIP 110041 / 391-98 / NVH 391-98).